A 216-amino-acid polypeptide reads, in one-letter code: Large ribosomal subunit protein uL3 (216 aa).

Glutamine 157 is modified (N5-methylglutamine).

This sequence belongs to the universal ribosomal protein uL3 family. Part of the 50S ribosomal subunit. Forms a cluster with proteins L14 and L19. Post-translationally, methylated by PrmB.

In terms of biological role, one of the primary rRNA binding proteins, it binds directly near the 3'-end of the 23S rRNA, where it nucleates assembly of the 50S subunit. This is Large ribosomal subunit protein uL3 from Xanthomonas oryzae pv. oryzae (strain MAFF 311018).